The sequence spans 389 residues: tRNA-specific 2-thiouridylase MnmA (389 aa).

ATP is bound by residues 9-16 (GMSGGVDS) and methionine 35. The tract at residues 95–97 (NPD) is interaction with target base in tRNA. Catalysis depends on cysteine 100, which acts as the Nucleophile. An intrachain disulfide couples cysteine 100 to cysteine 196. Glycine 124 is a binding site for ATP. The interaction with tRNA stretch occupies residues 146-148 (KDQ). Cysteine 196 acts as the Cysteine persulfide intermediate in catalysis. An interaction with tRNA region spans residues 308–309 (RY).

The protein belongs to the MnmA/TRMU family.

It localises to the cytoplasm. The catalysed reaction is S-sulfanyl-L-cysteinyl-[protein] + uridine(34) in tRNA + AH2 + ATP = 2-thiouridine(34) in tRNA + L-cysteinyl-[protein] + A + AMP + diphosphate + H(+). Catalyzes the 2-thiolation of uridine at the wobble position (U34) of tRNA, leading to the formation of s(2)U34. This is tRNA-specific 2-thiouridylase MnmA from Burkholderia ambifaria (strain MC40-6).